The primary structure comprises 122 residues: Large ribosomal subunit protein uL14 (122 aa).

It belongs to the universal ribosomal protein uL14 family. As to quaternary structure, part of the 50S ribosomal subunit. Forms a cluster with proteins L3 and L19. In the 70S ribosome, L14 and L19 interact and together make contacts with the 16S rRNA in bridges B5 and B8.

In terms of biological role, binds to 23S rRNA. Forms part of two intersubunit bridges in the 70S ribosome. The protein is Large ribosomal subunit protein uL14 of Nocardia farcinica (strain IFM 10152).